Here is a 305-residue protein sequence, read N- to C-terminus: UDP-N-acetylenolpyruvoylglucosamine reductase 2 (305 aa).

The FAD-binding PCMH-type domain maps to 33–197 (VGGKADVFVA…LEARFELEEG (165 aa)). The active site involves Arg176. The active-site Proton donor is Ser226. Glu296 is a catalytic residue.

This sequence belongs to the MurB family. FAD is required as a cofactor.

Its subcellular location is the cytoplasm. It catalyses the reaction UDP-N-acetyl-alpha-D-muramate + NADP(+) = UDP-N-acetyl-3-O-(1-carboxyvinyl)-alpha-D-glucosamine + NADPH + H(+). The protein operates within cell wall biogenesis; peptidoglycan biosynthesis. In terms of biological role, cell wall formation. This is UDP-N-acetylenolpyruvoylglucosamine reductase 2 from Bacillus cereus (strain ATCC 10987 / NRS 248).